Here is a 380-residue protein sequence, read N- to C-terminus: UDP-N-acetylglucosamine 2-epimerase (380 aa).

It belongs to the UDP-N-acetylglucosamine 2-epimerase family.

The protein resides in the cytoplasm. The enzyme catalyses UDP-N-acetyl-alpha-D-glucosamine = UDP-N-acetyl-alpha-D-mannosamine. The protein operates within cell wall biogenesis; poly(glycerol phosphate) teichoic acid biosynthesis. Catalyzes the conversion of UDP-N-acetylglucosamine into UDP-N-acetylmannosamine, a precursor of the teichoic acid linkage unit. The sequence is that of UDP-N-acetylglucosamine 2-epimerase (mnaA) from Bacillus subtilis (strain 168).